Reading from the N-terminus, the 70-residue chain is Large ribosomal subunit protein uL30 (70 aa).

Belongs to the universal ribosomal protein uL30 family. As to quaternary structure, part of the 50S ribosomal subunit.

The chain is Large ribosomal subunit protein uL30 from Renibacterium salmoninarum (strain ATCC 33209 / DSM 20767 / JCM 11484 / NBRC 15589 / NCIMB 2235).